The chain runs to 134 residues: Ribonuclease VapC1 (134 aa).

The 130-residue stretch at 3-132 (YMLDTNIIIY…RITDLQWQDW (130 aa)) folds into the PINc domain. The Mg(2+) site is built by Asp6 and Asp99.

This sequence belongs to the PINc/VapC protein family. In terms of assembly, forms a complex with VapB1. It depends on Mg(2+) as a cofactor.

Functionally, toxic component of a type II toxin-antitoxin (TA) system. Upon expression in E.coli inhibits growth in liquid culture. Its toxic effect is neutralized by coexpression with antitoxin VapB1. Degrades RNA but not ss- or ds-DNA in vitro, degradation is inhibited by VapB1 antitoxin. The sequence is that of Ribonuclease VapC1 from Haemophilus influenzae (strain R2866).